The chain runs to 307 residues: Plasmodesmata-located protein 2 (307 aa).

The first 23 residues, 1–23 (MGLSISFLSIIMMMCLLFPDLNV), serve as a signal peptide directing secretion. Residues 24 to 275 (VVKSATTEYT…STSTGATGKT (252 aa)) are Extracellular-facing. 2 consecutive Gnk2-homologous domains span residues 33 to 136 (TTLI…VSGF) and 141 to 240 (GMEM…YYPN). Cystine bridges form between Cys-40/Cys-114, Cys-90/Cys-99, Cys-102/Cys-127, Cys-149/Cys-218, Cys-194/Cys-203, and Cys-206/Cys-231. Positions 246 to 268 (SSSSSSSSSSSSSGSSNSDPSTS) are enriched in low complexity. The tract at residues 246–270 (SSSSSSSSSSSSSGSSNSDPSTSTG) is disordered. The helical transmembrane segment at 276-296 (VAIIVGGAAGVGFLVICLLFA) threads the bilayer. A necessary and sufficient for plasmodesmal targeting region spans residues 276–296 (VAIIVGGAAGVGFLVICLLFA). The Cytoplasmic portion of the chain corresponds to 297 to 307 (KNLMRKKHDDY).

This sequence belongs to the cysteine-rich repeat secretory protein family. Plasmodesmata-located proteins (PDLD) subfamily. (Microbial infection) Interacts with Grapevine fanleaf virus (GFLV) 2B-MP. Highly expressed in inflorescence shoot apex. Uniformly expressed within the inflorescence meristem with the exception of a boundary zone between floral primordia and the meristem where the expression is weaker (at protein level).

Its subcellular location is the cell membrane. It localises to the cell junction. It is found in the plasmodesma. Modulates cell-to-cell trafficking. The protein is Plasmodesmata-located protein 2 of Arabidopsis thaliana (Mouse-ear cress).